The sequence spans 406 residues: Cysteine desulfurase (406 aa).

Lys-226 carries the N6-(pyridoxal phosphate)lysine modification. The active-site Cysteine persulfide intermediate is Cys-364.

This sequence belongs to the class-V pyridoxal-phosphate-dependent aminotransferase family. Csd subfamily. In terms of assembly, homodimer. Interacts with SufE and the SufBCD complex composed of SufB, SufC and SufD. The interaction with SufE is required to mediate the direct transfer of the sulfur atom from the S-sulfanylcysteine. Pyridoxal 5'-phosphate is required as a cofactor.

The protein localises to the cytoplasm. It catalyses the reaction (sulfur carrier)-H + L-cysteine = (sulfur carrier)-SH + L-alanine. The catalysed reaction is L-selenocysteine + AH2 = hydrogenselenide + L-alanine + A + H(+). The protein operates within cofactor biosynthesis; iron-sulfur cluster biosynthesis. In terms of biological role, cysteine desulfurases mobilize the sulfur from L-cysteine to yield L-alanine, an essential step in sulfur metabolism for biosynthesis of a variety of sulfur-containing biomolecules. Component of the suf operon, which is activated and required under specific conditions such as oxidative stress and iron limitation. Acts as a potent selenocysteine lyase in vitro, that mobilizes selenium from L-selenocysteine. Selenocysteine lyase activity is however unsure in vivo. The protein is Cysteine desulfurase of Yersinia pestis bv. Antiqua (strain Antiqua).